The sequence spans 280 residues: Pantothenate synthetase (280 aa).

31–38 provides a ligand contact to ATP; the sequence is MGNLHVGH. Histidine 38 functions as the Proton donor in the catalytic mechanism. A (R)-pantoate-binding site is contributed by glutamine 62. Glutamine 62 is a binding site for beta-alanine. Residue 150–153 participates in ATP binding; it reads GKKD. Glutamine 156 is a binding site for (R)-pantoate. Residues valine 179 and 187-190 contribute to the ATP site; that span reads MSSR.

It belongs to the pantothenate synthetase family. Homodimer.

Its subcellular location is the cytoplasm. The catalysed reaction is (R)-pantoate + beta-alanine + ATP = (R)-pantothenate + AMP + diphosphate + H(+). The protein operates within cofactor biosynthesis; (R)-pantothenate biosynthesis; (R)-pantothenate from (R)-pantoate and beta-alanine: step 1/1. In terms of biological role, catalyzes the condensation of pantoate with beta-alanine in an ATP-dependent reaction via a pantoyl-adenylate intermediate. This Xanthomonas oryzae pv. oryzae (strain KACC10331 / KXO85) protein is Pantothenate synthetase.